We begin with the raw amino-acid sequence, 502 residues long: Glycerol kinase (502 aa).

ADP is bound at residue T14. ATP-binding residues include T14, T15, and S16. T14 contributes to the sn-glycerol 3-phosphate binding site. R18 contributes to the ADP binding site. The sn-glycerol 3-phosphate site is built by R84, E85, Y136, and D246. Residues R84, E85, Y136, D246, and Q247 each coordinate glycerol. ADP is bound by residues T268 and G311. The ATP site is built by T268, G311, Q315, and G412. 2 residues coordinate ADP: G412 and N416.

Belongs to the FGGY kinase family. As to quaternary structure, homotetramer and homodimer (in equilibrium). Heterodimer with EIIA-Glc. Binds 1 zinc ion per glycerol kinase EIIA-Glc dimer. The zinc ion is important for dimerization.

The enzyme catalyses glycerol + ATP = sn-glycerol 3-phosphate + ADP + H(+). The protein operates within polyol metabolism; glycerol degradation via glycerol kinase pathway; sn-glycerol 3-phosphate from glycerol: step 1/1. Its activity is regulated as follows. Activity of this regulatory enzyme is affected by several metabolites. Allosterically and non-competitively inhibited by fructose 1,6-bisphosphate (FBP) and unphosphorylated phosphocarrier protein EIIA-Glc (III-Glc), an integral component of the bacterial phosphotransferase (PTS) system. Functionally, key enzyme in the regulation of glycerol uptake and metabolism. Catalyzes the phosphorylation of glycerol to yield sn-glycerol 3-phosphate. In Escherichia coli O127:H6 (strain E2348/69 / EPEC), this protein is Glycerol kinase.